A 460-amino-acid chain; its full sequence is UDP-glycosyltransferase 91C1 (460 aa).

UDP-alpha-D-glucose is bound by residues Thr-283, 335-337 (VPQ), 352-360 (HCGWNSVVE), and 374-377 (LNEQ).

Belongs to the UDP-glycosyltransferase family.

This is UDP-glycosyltransferase 91C1 (UGT91C1) from Arabidopsis thaliana (Mouse-ear cress).